A 457-amino-acid polypeptide reads, in one-letter code: Argininosuccinate lyase (457 aa).

This sequence belongs to the lyase 1 family. Argininosuccinate lyase subfamily.

The protein resides in the cytoplasm. It catalyses the reaction 2-(N(omega)-L-arginino)succinate = fumarate + L-arginine. It participates in amino-acid biosynthesis; L-arginine biosynthesis; L-arginine from L-ornithine and carbamoyl phosphate: step 3/3. In Shewanella sediminis (strain HAW-EB3), this protein is Argininosuccinate lyase.